The sequence spans 160 residues: Secreted RxLR effector protein 83 (160 aa).

An N-terminal signal peptide occupies residues Met1–Ala21. The short motif at Arg27–Arg30 is the RxLR element. Asn39 and Asn131 each carry an N-linked (GlcNAc...) asparagine glycan.

The protein belongs to the RxLR effector family.

It is found in the secreted. Its subcellular location is the host nucleus. The protein localises to the host cytoplasm. Secreted effector that completely suppresses the host cell death induced by cell death-inducing proteins. This chain is Secreted RxLR effector protein 83, found in Plasmopara viticola (Downy mildew of grapevine).